The primary structure comprises 857 residues: DNA mismatch repair protein MutS (857 aa).

608-615 serves as a coordination point for ATP; that stretch reads GPNMSGKS.

Belongs to the DNA mismatch repair MutS family.

Its function is as follows. This protein is involved in the repair of mismatches in DNA. It is possible that it carries out the mismatch recognition step. This protein has a weak ATPase activity. The protein is DNA mismatch repair protein MutS of Lacticaseibacillus casei (strain BL23) (Lactobacillus casei).